We begin with the raw amino-acid sequence, 193 residues long: ATP-dependent Clp protease proteolytic subunit (193 aa).

Ser98 serves as the catalytic Nucleophile. Residue His123 is part of the active site.

Belongs to the peptidase S14 family. In terms of assembly, fourteen ClpP subunits assemble into 2 heptameric rings which stack back to back to give a disk-like structure with a central cavity, resembling the structure of eukaryotic proteasomes.

The protein resides in the cytoplasm. It carries out the reaction Hydrolysis of proteins to small peptides in the presence of ATP and magnesium. alpha-casein is the usual test substrate. In the absence of ATP, only oligopeptides shorter than five residues are hydrolyzed (such as succinyl-Leu-Tyr-|-NHMec, and Leu-Tyr-Leu-|-Tyr-Trp, in which cleavage of the -Tyr-|-Leu- and -Tyr-|-Trp bonds also occurs).. Functionally, cleaves peptides in various proteins in a process that requires ATP hydrolysis. Has a chymotrypsin-like activity. Plays a major role in the degradation of misfolded proteins. This Haemophilus influenzae (strain 86-028NP) protein is ATP-dependent Clp protease proteolytic subunit.